Reading from the N-terminus, the 534-residue chain is ATP synthase subunit alpha 2 (534 aa).

175–182 (GDRQTGKT) is an ATP binding site. The interval 506 to 534 (FQPAPEPETAPKTKTDIKPKPKAAGGESS) is disordered. Residues 514–524 (TAPKTKTDIKP) are compositionally biased toward basic and acidic residues.

This sequence belongs to the ATPase alpha/beta chains family. F-type ATPases have 2 components, CF(1) - the catalytic core - and CF(0) - the membrane proton channel. CF(1) has five subunits: alpha(3), beta(3), gamma(1), delta(1), epsilon(1). CF(0) has three main subunits: a(1), b(2) and c(9-12). The alpha and beta chains form an alternating ring which encloses part of the gamma chain. CF(1) is attached to CF(0) by a central stalk formed by the gamma and epsilon chains, while a peripheral stalk is formed by the delta and b chains.

It localises to the cell inner membrane. The enzyme catalyses ATP + H2O + 4 H(+)(in) = ADP + phosphate + 5 H(+)(out). In terms of biological role, produces ATP from ADP in the presence of a proton gradient across the membrane. The alpha chain is a regulatory subunit. The sequence is that of ATP synthase subunit alpha 2 from Albidiferax ferrireducens (strain ATCC BAA-621 / DSM 15236 / T118) (Rhodoferax ferrireducens).